Reading from the N-terminus, the 149-residue chain is Deoxyuridine 5'-triphosphate nucleotidohydrolase (149 aa).

Substrate contacts are provided by residues 70 to 72 (RSG), Asn-83, and 87 to 89 (LID).

The protein belongs to the dUTPase family. Mg(2+) is required as a cofactor.

It catalyses the reaction dUTP + H2O = dUMP + diphosphate + H(+). The protein operates within pyrimidine metabolism; dUMP biosynthesis; dUMP from dCTP (dUTP route): step 2/2. In terms of biological role, this enzyme is involved in nucleotide metabolism: it produces dUMP, the immediate precursor of thymidine nucleotides and it decreases the intracellular concentration of dUTP so that uracil cannot be incorporated into DNA. This Blochmanniella pennsylvanica (strain BPEN) protein is Deoxyuridine 5'-triphosphate nucleotidohydrolase.